We begin with the raw amino-acid sequence, 76 residues long: Glutathione S-transferase (76 aa).

In terms of domain architecture, GST N-terminal spans 1 to 40 (XVAFETVPVDLMKGEHKQPAYLALQPFGTVPAVVDGDYXL). Residues 41–76 (LSAVLDVYEAHLHGYLAGDFVSLADLAHLPFTDYLV) enclose the GST C-terminal domain.

The protein belongs to the GST superfamily. Theta family.

Its subcellular location is the cytoplasm. It catalyses the reaction RX + glutathione = an S-substituted glutathione + a halide anion + H(+). In terms of biological role, conjugation of reduced glutathione to a wide number of exogenous and endogenous hydrophobic electrophiles. The protein is Glutathione S-transferase of Brassica oleracea var. italica (Broccoli).